Here is a 283-residue protein sequence, read N- to C-terminus: ATP phosphoribosyltransferase (283 aa).

It belongs to the ATP phosphoribosyltransferase family. Long subfamily. Mg(2+) is required as a cofactor.

The protein resides in the cytoplasm. It carries out the reaction 1-(5-phospho-beta-D-ribosyl)-ATP + diphosphate = 5-phospho-alpha-D-ribose 1-diphosphate + ATP. It participates in amino-acid biosynthesis; L-histidine biosynthesis; L-histidine from 5-phospho-alpha-D-ribose 1-diphosphate: step 1/9. Its activity is regulated as follows. Feedback inhibited by histidine. Catalyzes the condensation of ATP and 5-phosphoribose 1-diphosphate to form N'-(5'-phosphoribosyl)-ATP (PR-ATP). Has a crucial role in the pathway because the rate of histidine biosynthesis seems to be controlled primarily by regulation of HisG enzymatic activity. The chain is ATP phosphoribosyltransferase from Bifidobacterium longum (strain DJO10A).